Consider the following 374-residue polypeptide: C-X-C chemokine receptor type 5 (374 aa).

Over 1–57 (MNYPLTLDMGSITYNMDDLYKELAFYSNSTEIPLQDSNFCSTVEGPLLTSFKAVFMP) the chain is Extracellular. Asn28 carries an N-linked (GlcNAc...) asparagine glycan. The chain crosses the membrane as a helical span at residues 58–78 (VAYSLIFLLGMMGNILVLVIL). Topologically, residues 79–90 (ERHRHTRSSTET) are cytoplasmic. A helical transmembrane segment spans residues 91–111 (FLFHLAVADLLLVFILPFAVA). Topologically, residues 112–126 (EGSVGWVLGTFLCKT) are extracellular. Cys124 and Cys204 are joined by a disulfide. The chain crosses the membrane as a helical span at residues 127-147 (VIALHKINFYCSSLLLACIAV). Over 148–169 (DRYLAIVHAVHAYRRRRLLSIH) the chain is Cytoplasmic. A helical transmembrane segment spans residues 170-190 (ITCTAIWLAGFLFALPELLFA). Residues 191 to 221 (KVGQPHNNDSLPQCTFSQENEAETRAWFTSR) lie on the Extracellular side of the membrane. Asn198 carries N-linked (GlcNAc...) asparagine glycosylation. A helical transmembrane segment spans residues 222–242 (FLYHIGGFLLPMLVMGWCYVG). Residues 243–261 (VVHRLLQAQRRPQRQKAVR) lie on the Cytoplasmic side of the membrane. A helical transmembrane segment spans residues 262-282 (VAILVTSIFFLCWSPYHIVIF). Residues 283–306 (LDTLERLKAVNSSCELSGYLSVAI) lie on the Extracellular side of the membrane. A helical transmembrane segment spans residues 307–327 (TLCEFLGLAHCCLNPMLYTFA). Residues 328–374 (GVKFRSDLSRLLTKLGCAGPASLCQLFPNWRKSSLSESENATSLTTF) are Cytoplasmic-facing.

The protein belongs to the G-protein coupled receptor 1 family. Mainly in spleen, in resting B-cells.

The protein localises to the cell membrane. In terms of biological role, cytokine receptor that binds to B-lymphocyte chemoattractant (BLC). Involved in B-cell migration into B-cell follicles of spleen and Peyer patches but not into those of mesenteric or peripheral lymph nodes. The chain is C-X-C chemokine receptor type 5 (Cxcr5) from Mus musculus (Mouse).